A 131-amino-acid chain; its full sequence is Large ribosomal subunit protein bL17 (131 aa).

It belongs to the bacterial ribosomal protein bL17 family. As to quaternary structure, part of the 50S ribosomal subunit. Contacts protein L32.

This chain is Large ribosomal subunit protein bL17, found in Shewanella sp. (strain ANA-3).